Consider the following 215-residue polypeptide: Probable transaldolase (215 aa).

The Schiff-base intermediate with substrate role is filled by Lys-83.

Belongs to the transaldolase family. Type 3B subfamily.

It is found in the cytoplasm. It carries out the reaction D-sedoheptulose 7-phosphate + D-glyceraldehyde 3-phosphate = D-erythrose 4-phosphate + beta-D-fructose 6-phosphate. It functions in the pathway carbohydrate degradation; pentose phosphate pathway; D-glyceraldehyde 3-phosphate and beta-D-fructose 6-phosphate from D-ribose 5-phosphate and D-xylulose 5-phosphate (non-oxidative stage): step 2/3. Transaldolase is important for the balance of metabolites in the pentose-phosphate pathway. This chain is Probable transaldolase (tal), found in Clostridium acetobutylicum (strain ATCC 824 / DSM 792 / JCM 1419 / IAM 19013 / LMG 5710 / NBRC 13948 / NRRL B-527 / VKM B-1787 / 2291 / W).